Consider the following 267-residue polypeptide: 3-oxoadipate enol-lactonase 2 (267 aa).

It catalyses the reaction (4,5-dihydro-5-oxofuran-2-yl)-acetate + H2O = 3-oxoadipate + H(+). It functions in the pathway aromatic compound metabolism; beta-ketoadipate pathway; 3-oxoadipate from 5-oxo-4,5-dihydro-2-furylacetate: step 1/1. The chain is 3-oxoadipate enol-lactonase 2 (catD) from Acinetobacter baylyi (strain ATCC 33305 / BD413 / ADP1).